Reading from the N-terminus, the 192-residue chain is Crossover junction endodeoxyribonuclease RuvC (192 aa).

Active-site residues include Asp-9, Glu-70, and Asp-143. Mg(2+)-binding residues include Asp-9, Glu-70, and Asp-143. Residues 161-192 (GASVATTGPGSSSLTPAQRAWAEAEAKARRAR) are disordered. The segment covering 163–176 (SVATTGPGSSSLTP) has biased composition (polar residues). The segment covering 182-192 (AEAEAKARRAR) has biased composition (basic and acidic residues).

This sequence belongs to the RuvC family. In terms of assembly, homodimer which binds Holliday junction (HJ) DNA. The HJ becomes 2-fold symmetrical on binding to RuvC with unstacked arms; it has a different conformation from HJ DNA in complex with RuvA. In the full resolvosome a probable DNA-RuvA(4)-RuvB(12)-RuvC(2) complex forms which resolves the HJ. Requires Mg(2+) as cofactor.

It localises to the cytoplasm. The catalysed reaction is Endonucleolytic cleavage at a junction such as a reciprocal single-stranded crossover between two homologous DNA duplexes (Holliday junction).. In terms of biological role, the RuvA-RuvB-RuvC complex processes Holliday junction (HJ) DNA during genetic recombination and DNA repair. Endonuclease that resolves HJ intermediates. Cleaves cruciform DNA by making single-stranded nicks across the HJ at symmetrical positions within the homologous arms, yielding a 5'-phosphate and a 3'-hydroxyl group; requires a central core of homology in the junction. The consensus cleavage sequence is 5'-(A/T)TT(C/G)-3'. Cleavage occurs on the 3'-side of the TT dinucleotide at the point of strand exchange. HJ branch migration catalyzed by RuvA-RuvB allows RuvC to scan DNA until it finds its consensus sequence, where it cleaves and resolves the cruciform DNA. The protein is Crossover junction endodeoxyribonuclease RuvC of Pseudarthrobacter chlorophenolicus (strain ATCC 700700 / DSM 12829 / CIP 107037 / JCM 12360 / KCTC 9906 / NCIMB 13794 / A6) (Arthrobacter chlorophenolicus).